Here is a 117-residue protein sequence, read N- to C-terminus: Large ribosomal subunit protein uL18 (117 aa).

Belongs to the universal ribosomal protein uL18 family. Part of the 50S ribosomal subunit; part of the 5S rRNA/L5/L18/L25 subcomplex. Contacts the 5S and 23S rRNAs.

In terms of biological role, this is one of the proteins that bind and probably mediate the attachment of the 5S RNA into the large ribosomal subunit, where it forms part of the central protuberance. The protein is Large ribosomal subunit protein uL18 of Histophilus somni (strain 129Pt) (Haemophilus somnus).